The chain runs to 345 residues: Mitochondrial substrate carrier family protein J (345 aa).

The Mitochondrial intermembrane portion of the chain corresponds to Met-1–Tyr-31. 3 Solcar repeats span residues Arg-30 to Gly-118, Asp-129 to Lys-217, and Glu-255 to Leu-342. A helical transmembrane segment spans residues Tyr-32–Ile-52. Residues Arg-53–Arg-88 are Mitochondrial matrix-facing. Residues Ala-89–Gly-110 form a helical membrane-spanning segment. Topologically, residues Ser-111–Asp-129 are mitochondrial intermembrane. Residues Leu-130–Val-150 traverse the membrane as a helical segment. Residues Pro-151–Lys-191 are Mitochondrial matrix-facing. Residues Gly-192 to Trp-208 form a helical membrane-spanning segment. Residues Gly-209–Pro-257 lie on the Mitochondrial intermembrane side of the membrane. Residues Ile-258–Leu-278 form a helical membrane-spanning segment. Residues Asp-279 to Lys-316 are Mitochondrial matrix-facing. Residues Gly-317–Glu-337 form a helical membrane-spanning segment. At Glu-338 to Lys-345 the chain is on the mitochondrial intermembrane side.

It belongs to the mitochondrial carrier (TC 2.A.29) family.

It localises to the mitochondrion inner membrane. Functionally, mitochondrial solute carriers shuttle metabolites, nucleotides, and cofactors through the mitochondrial inner membrane. This is Mitochondrial substrate carrier family protein J (mcfJ) from Dictyostelium discoideum (Social amoeba).